Consider the following 692-residue polypeptide: Elongation factor G (692 aa).

The region spanning 8–282 (EKTRNIGIMA…AIVDFLPAPT (275 aa)) is the tr-type G domain. GTP contacts are provided by residues 17-24 (AHIDAGKT), 81-85 (DTPGH), and 135-138 (NKMD).

Belongs to the TRAFAC class translation factor GTPase superfamily. Classic translation factor GTPase family. EF-G/EF-2 subfamily.

It is found in the cytoplasm. In terms of biological role, catalyzes the GTP-dependent ribosomal translocation step during translation elongation. During this step, the ribosome changes from the pre-translocational (PRE) to the post-translocational (POST) state as the newly formed A-site-bound peptidyl-tRNA and P-site-bound deacylated tRNA move to the P and E sites, respectively. Catalyzes the coordinated movement of the two tRNA molecules, the mRNA and conformational changes in the ribosome. The chain is Elongation factor G from Moorella thermoacetica (strain ATCC 39073 / JCM 9320).